The following is a 461-amino-acid chain: Steroidogenic factor 1 (461 aa).

The segment at residues 10 to 85 (DELCPVCGDK…VGMRLEAVRA (76 aa)) is a DNA-binding region (nuclear receptor). The NR C4-type zinc-finger motif lies at 13–33 (CPVCGDKVSGYHYGLLTCESC). An N6-acetyllysine mark is found at Lys34, Lys38, and Lys72. An NR C4-type zinc finger spans residues 49 to 73 (CTESQSCKIDKTQRKRCPFCRFQKC). The interval 116–158 (NGFKLETGPPVGVPPPPPPPPDYMLPHGLHASEPKGLASGPPA) is disordered. Lys119 is covalently cross-linked (Glycyl lysine isopeptide (Lys-Gly) (interchain with G-Cter in SUMO)). Positions 126 to 138 (VGVPPPPPPPPDY) are enriched in pro residues. Lys194 is covalently cross-linked (Glycyl lysine isopeptide (Lys-Gly) (interchain with G-Cter in SUMO)). A Phosphoserine; by CDK7 modification is found at Ser203. The NR LBD domain occupies 222 to 459 (GVPELILQLL…NLLIEMLQAK (238 aa)). The segment at 230 to 461 (LLQLEPDEDQ…LIEMLQAKQT (232 aa)) is important for dimerization. Residues Gly341, Tyr436, and Lys440 each contribute to the a 1,2-diacyl-sn-glycero-3-phosphocholine site.

The protein belongs to the nuclear hormone receptor family. NR5 subfamily. In terms of assembly, binds DNA as a monomer. Part of a complex consisting of SFPQ, NONO and NR5A1. Interacts with NR0B2. Interacts with DGKQ and CDK7. Binds to and activated by HIPK3. In terms of processing, may be regulated by phosphorylation and dephosphorylation. Post-translationally, acetylation stimulates the transcriptional activity. Sumoylation reduces CDK7-mediated phosphorylation on Ser-203. In terms of processing, phosphorylated on Ser-203 by CDK7. This phosphorylation promotes transcriptional activity. Adrenal, ovary, testis, placenta, adipocyte, and brain.

The protein resides in the nucleus. Functionally, transcriptional activator. Seems to be essential for sexual differentiation and formation of the primary steroidogenic tissues. Binds to the Ad4 site found in the promoter region of steroidogenic P450 genes such as CYP11A, CYP11B and CYP21B. Also regulates the AMH/Muellerian inhibiting substance gene as well as the AHCH and STAR genes. 5'-YCAAGGYC-3' and 5'-RRAGGTCA-3' are the consensus sequences for the recognition by NR5A1. The SFPQ-NONO-NR5A1 complex binds to the CYP17 promoter and regulates basal and cAMP-dependent transcriptional activity. Binds phospholipids with a phosphatidylinositol (PI) headgroup, in particular PI(3,4)P2 and PI(3,4,5)P3. Activated by the phosphorylation of NR5A1 by HIPK3 leading to increased steroidogenic gene expression upon cAMP signaling pathway stimulation. The chain is Steroidogenic factor 1 (NR5A1) from Bos taurus (Bovine).